A 419-amino-acid polypeptide reads, in one-letter code: Tyrosine--tRNA ligase (419 aa).

Tyr34 provides a ligand contact to L-tyrosine. Positions 39–48 match the 'HIGH' region motif; the sequence is PSGDSMHIGH. Residues Tyr168 and Gln172 each contribute to the L-tyrosine site. The 'KMSKS' region signature appears at 230 to 234; it reads KFGKS. Residue Lys233 coordinates ATP. The S4 RNA-binding domain maps to 352 to 418; sequence VNLVDWLVSL…GKKKYFLVSY (67 aa).

Belongs to the class-I aminoacyl-tRNA synthetase family. TyrS type 1 subfamily. As to quaternary structure, homodimer.

The protein resides in the cytoplasm. It catalyses the reaction tRNA(Tyr) + L-tyrosine + ATP = L-tyrosyl-tRNA(Tyr) + AMP + diphosphate + H(+). Functionally, catalyzes the attachment of tyrosine to tRNA(Tyr) in a two-step reaction: tyrosine is first activated by ATP to form Tyr-AMP and then transferred to the acceptor end of tRNA(Tyr). The sequence is that of Tyrosine--tRNA ligase from Listeria welshimeri serovar 6b (strain ATCC 35897 / DSM 20650 / CCUG 15529 / CIP 8149 / NCTC 11857 / SLCC 5334 / V8).